A 422-amino-acid polypeptide reads, in one-letter code: 3-phosphoshikimate 1-carboxyvinyltransferase (422 aa).

Lysine 21, serine 22, and arginine 26 together coordinate 3-phosphoshikimate. Lysine 21 lines the phosphoenolpyruvate pocket. Residues glycine 93 and arginine 121 each coordinate phosphoenolpyruvate. 6 residues coordinate 3-phosphoshikimate: serine 166, serine 167, glutamine 168, serine 194, aspartate 310, and lysine 337. Glutamine 168 contributes to the phosphoenolpyruvate binding site. Aspartate 310 functions as the Proton acceptor in the catalytic mechanism. Positions 341, 382, and 407 each coordinate phosphoenolpyruvate.

The protein belongs to the EPSP synthase family. As to quaternary structure, monomer.

The protein localises to the cytoplasm. It carries out the reaction 3-phosphoshikimate + phosphoenolpyruvate = 5-O-(1-carboxyvinyl)-3-phosphoshikimate + phosphate. Its pathway is metabolic intermediate biosynthesis; chorismate biosynthesis. Its function is as follows. Catalyzes the transfer of the enolpyruvyl moiety of phosphoenolpyruvate (PEP) to the 5-hydroxyl of shikimate-3-phosphate (S3P) to produce enolpyruvyl shikimate-3-phosphate and inorganic phosphate. This chain is 3-phosphoshikimate 1-carboxyvinyltransferase, found in Methanoculleus marisnigri (strain ATCC 35101 / DSM 1498 / JR1).